The chain runs to 306 residues: D-alanine--D-alanine ligase (306 aa).

Positions 101–303 (KQVWQAVGLP…FSQLVVKILE (203 aa)) constitute an ATP-grasp domain. 134-189 (FTHLGLPLIVKPSREGSSVGMSKVNTLSELPAALEEAFRHDDDILVEKWLSGPEYT) contacts ATP. Residues D257, E270, and N272 each contribute to the Mg(2+) site.

Belongs to the D-alanine--D-alanine ligase family. Requires Mg(2+) as cofactor. Mn(2+) serves as cofactor.

It localises to the cytoplasm. It catalyses the reaction 2 D-alanine + ATP = D-alanyl-D-alanine + ADP + phosphate + H(+). Its pathway is cell wall biogenesis; peptidoglycan biosynthesis. Cell wall formation. This chain is D-alanine--D-alanine ligase, found in Pectobacterium carotovorum subsp. carotovorum (strain PC1).